A 576-amino-acid polypeptide reads, in one-letter code: Insulin-like growth factor 2 mRNA-binding protein 1 (576 aa).

RRM domains follow at residues 2–75 (NKLY…HSVP) and 81–156 (RKIQ…YIPD). The disordered stretch occupies residues 158–189 (QSVQGPENGRRGGFGARGAPRQGSPVTAGAPV). KH domains are found at residues 195 to 260 (DIPL…CKMI) and 276 to 343 (EVPL…EQEI). Y396 is modified (phosphotyrosine; by SRC). KH domains are found at residues 404-469 (QETV…QGRI) and 486-552 (KLET…QRKI).

This sequence belongs to the RRM IMP/VICKZ family. In terms of assembly, can form homooligomers and heterooligomers with IGF2BP1 and IGF2BP3 in an RNA-dependent manner. Associates with the cytoskeleton, predominantly with actin filament bundles and occasionally with microtubules. In a heterologous system, interacts with ELAVL1, DHX9 and HNRNPU. Phosphorylated by SRC at Tyr-396. This residue is involved in ACTB mRNA binding, its phosphorylation impairs association with ACTB mRNA and hence abolishes translational repression. Phosphorylation occurs in close proximity to filopodia and in the growth cones of differentiated neuroglioblastoma cells. As to expression, expressed in neurons and embryonic fibroblasts (at protein level).

It is found in the nucleus. The protein localises to the cytoplasm. It localises to the perinuclear region. The protein resides in the P-body. Its subcellular location is the stress granule. It is found in the cell projection. The protein localises to the growth cone. It localises to the filopodium. The protein resides in the lamellipodium. In terms of biological role, RNA-binding factor that recruits target transcripts to cytoplasmic protein-RNA complexes (mRNPs). This transcript 'caging' into mRNPs allows mRNA transport and transient storage. It also modulates the rate and location at which target transcripts encounter the translational apparatus and shields them from endonuclease attacks or microRNA-mediated degradation. Preferentially binds to N6-methyladenosine (m6A)-containing mRNAs and increases their stability. Plays a direct role in the transport and translation of transcripts required for axonal regeneration in adult sensory neurons. Regulates localized beta-actin/ACTB mRNA translation in polarized cells, a crucial process for cell migration and neurite outgrowth. Co-transcriptionally associates with the ACTB mRNA in the nucleus. This binding involves by a conserved 54-nucleotide element in the ACTB mRNA 3'-UTR, known as the 'zipcode'. The ribonucleoparticle (RNP) thus formed is exported to the cytoplasm, binds to a motor protein and is transported along the cytoskeleton to the cell periphery. During transport, IGF2BP1 prevents beta-actin mRNA from being translated into protein. When the RNP complex reaches its destination near the plasma membrane, IGF2BP1 is phosphorylated by SRC. This releases the mRNA, allowing ribosomal 40S and 60S subunits to assemble and initiate ACTB protein synthesis. The monomeric ACTB protein then assembles into the subcortical actin cytoskeleton, which pushes the leading edge onwards. Binds MYC mRNA. Binding to MYC mRNA is enhanced by m6A-modification of the CRD. Promotes the directed movement of cells by fine-tuning intracellular signaling networks. Binds to MAPK4 3'-UTR and inhibits its translation. Interacts with PTEN transcript open reading frame (ORF) and prevents mRNA decay. This combined action on MAPK4 (down-regulation) and PTEN (up-regulation) antagonizes HSPB1 phosphorylation, consequently it prevents G-actin sequestration by phosphorylated HSPB1, allowing F-actin polymerization. Hence enhances the velocity of cell migration and stimulates directed cell migration by PTEN-modulated polarization. This Gallus gallus (Chicken) protein is Insulin-like growth factor 2 mRNA-binding protein 1 (IGF2BP1).